Consider the following 362-residue polypeptide: 3-dehydroquinate synthase (362 aa).

NAD(+) is bound by residues 71–76 (DGEQYK), 105–109 (GVVGD), 129–130 (TT), Lys-142, Lys-151, and 169–172 (CLKT). Residues Glu-184, His-247, and His-264 each contribute to the Zn(2+) site.

This sequence belongs to the sugar phosphate cyclases superfamily. Dehydroquinate synthase family. Co(2+) serves as cofactor. It depends on Zn(2+) as a cofactor. NAD(+) is required as a cofactor.

The protein localises to the cytoplasm. It carries out the reaction 7-phospho-2-dehydro-3-deoxy-D-arabino-heptonate = 3-dehydroquinate + phosphate. Its pathway is metabolic intermediate biosynthesis; chorismate biosynthesis; chorismate from D-erythrose 4-phosphate and phosphoenolpyruvate: step 2/7. In terms of biological role, catalyzes the conversion of 3-deoxy-D-arabino-heptulosonate 7-phosphate (DAHP) to dehydroquinate (DHQ). The chain is 3-dehydroquinate synthase from Escherichia coli O6:K15:H31 (strain 536 / UPEC).